The sequence spans 403 residues: S-adenosylmethionine synthase (403 aa).

His-16 contributes to the ATP binding site. Position 18 (Asp-18) interacts with Mg(2+). K(+) is bound at residue Glu-44. L-methionine contacts are provided by Glu-57 and Gln-100. A flexible loop region spans residues 100 to 110; the sequence is QSSDIAQGVDR. ATP contacts are provided by residues 165 to 167, Asp-242, 248 to 249, Ala-265, and Lys-269; these read DAK and RK. Asp-242 is an L-methionine binding site. Lys-273 serves as a coordination point for L-methionine.

This sequence belongs to the AdoMet synthase family. Homotetramer; dimer of dimers. Mg(2+) serves as cofactor. It depends on K(+) as a cofactor.

The protein resides in the cytoplasm. The catalysed reaction is L-methionine + ATP + H2O = S-adenosyl-L-methionine + phosphate + diphosphate. It functions in the pathway amino-acid biosynthesis; S-adenosyl-L-methionine biosynthesis; S-adenosyl-L-methionine from L-methionine: step 1/1. Catalyzes the formation of S-adenosylmethionine (AdoMet) from methionine and ATP. The overall synthetic reaction is composed of two sequential steps, AdoMet formation and the subsequent tripolyphosphate hydrolysis which occurs prior to release of AdoMet from the enzyme. The sequence is that of S-adenosylmethionine synthase from Nitrosococcus oceani (strain ATCC 19707 / BCRC 17464 / JCM 30415 / NCIMB 11848 / C-107).